The primary structure comprises 426 residues: Glutamate-1-semialdehyde 2,1-aminomutase (426 aa).

Lys265 carries the post-translational modification N6-(pyridoxal phosphate)lysine.

This sequence belongs to the class-III pyridoxal-phosphate-dependent aminotransferase family. HemL subfamily. As to quaternary structure, homodimer. Requires pyridoxal 5'-phosphate as cofactor.

The protein resides in the cytoplasm. The enzyme catalyses (S)-4-amino-5-oxopentanoate = 5-aminolevulinate. Its pathway is porphyrin-containing compound metabolism; protoporphyrin-IX biosynthesis; 5-aminolevulinate from L-glutamyl-tRNA(Glu): step 2/2. The sequence is that of Glutamate-1-semialdehyde 2,1-aminomutase (hemL) from Salmonella typhimurium (strain SL1344).